Here is a 674-residue protein sequence, read N- to C-terminus: tRNA-guanine(15) transglycosylase (674 aa).

Catalysis depends on Asp-90, which acts as the Nucleophile. Residues Asp-125 and Ala-192 each contribute to the substrate site. Positions 275, 277, and 280 each coordinate Zn(2+). One can recognise a PUA domain in the interval 596 to 671 (HNRVVVSEDS…QAIKTRKWKK (76 aa)).

This sequence belongs to the archaeosine tRNA-ribosyltransferase family. Requires Zn(2+) as cofactor.

The enzyme catalyses guanosine(15) in tRNA + 7-cyano-7-deazaguanine = 7-cyano-7-carbaguanosine(15) in tRNA + guanine. Its pathway is tRNA modification; archaeosine-tRNA biosynthesis. Functionally, exchanges the guanine residue with 7-cyano-7-deazaguanine (preQ0) at position 15 in the dihydrouridine loop (D-loop) of archaeal tRNAs. The protein is tRNA-guanine(15) transglycosylase of Methanosphaera stadtmanae (strain ATCC 43021 / DSM 3091 / JCM 11832 / MCB-3).